The chain runs to 362 residues: Poly(rC)-binding protein 2 (362 aa).

2 KH domains span residues 13–75 (TLTI…FAMI) and 97–162 (PVTL…VKQI). Lys-115 is covalently cross-linked (Glycyl lysine isopeptide (Lys-Gly) (interchain with G-Cter in SUMO2)). A Phosphoserine modification is found at Ser-169. A Glycyl lysine isopeptide (Lys-Gly) (interchain with G-Cter in SUMO2) cross-link involves residue Lys-181. 2 positions are modified to phosphoserine: Ser-185 and Ser-268. Positions 284-348 (TTSHELTIPN…ASISLAQYLI (65 aa)) constitute a KH 3 domain. Lys-319 participates in a covalent cross-link: Glycyl lysine isopeptide (Lys-Gly) (interchain with G-Cter in SUMO2). Phosphoserine occurs at positions 361 and 362.

Identified in a mRNP complex, at least composed of DHX9, DDX3X, ELAVL1, HNRNPU, IGF2BP1, ILF3, PABPC1, PCBP2, PTBP2, STAU1, STAU2, SYNCRIP and YBX1. Interacts with IFIH1 and RNF135. Interacts with MAVS (via C-terminus) and ITCH (via WW domains). Interacts with CGAS; preventing the formation of liquid-like droplets in which CGAS is activated. In terms of processing, phosphorylated. The non-phosphorylated form(s) exhibited the strongest poly(rC)-binding activity.

It localises to the nucleus. Its subcellular location is the cytoplasm. In terms of biological role, single-stranded nucleic acid binding protein that binds preferentially to oligo dC. Major cellular poly(rC)-binding protein. Also binds poly(rU). Acts as a negative regulator of antiviral signaling. Negatively regulates cellular antiviral responses mediated by MAVS signaling. It acts as an adapter between MAVS and the E3 ubiquitin ligase ITCH, therefore triggering MAVS ubiquitination and degradation. Negativeley regulates the cGAS-STING pathway via interaction with CGAS, preventing the formation of liquid-like droplets in which CGAS is activated. Together with PCBP1, required for erythropoiesis, possibly by regulating mRNA splicing. The chain is Poly(rC)-binding protein 2 (Pcbp2) from Mus musculus (Mouse).